The sequence spans 449 residues: uncharacterized protein (449 aa).

The span at 1–11 (MLDAPEQDPVD) shows a compositional bias: acidic residues. The tract at residues 1 to 33 (MLDAPEQDPVDPGDPASPPHGEAEQPLPGPRWP) is disordered. The helical transmembrane segment at 45–65 (LLLTALGGLLIAGLVTAIPAV) threads the bilayer. Residues 349 to 449 (QPPVPPPDIP…PGPAEPAPAG (101 aa)) form a disordered region. A compositionally biased stretch (pro residues) spans 365 to 387 (PPIPLQLPTPRPAPPAQQLPSTP). Residues 409–418 (HAPASAAPAE) show a composition bias toward low complexity. A compositionally biased stretch (pro residues) spans 437–449 (ATPPGPAEPAPAG).

The protein resides in the cell membrane. The protein localises to the secreted. May play a role in septum formation. This is an uncharacterized protein from Mycobacterium tuberculosis (strain CDC 1551 / Oshkosh).